A 389-amino-acid chain; its full sequence is Succinate--CoA ligase [ADP-forming] subunit beta (389 aa).

The region spanning 9-244 is the ATP-grasp domain; that stretch reads KEILRKYNVP…LDEEDANEIE (236 aa). Residues lysine 46, 53-55, glutamate 99, alanine 102, and glutamate 107 contribute to the ATP site; that span reads GRG. Residues asparagine 199 and aspartate 213 each coordinate Mg(2+). Residues asparagine 264 and 321-323 each bind substrate; that span reads GIM.

It belongs to the succinate/malate CoA ligase beta subunit family. In terms of assembly, heterotetramer of two alpha and two beta subunits. Mg(2+) is required as a cofactor.

It carries out the reaction succinate + ATP + CoA = succinyl-CoA + ADP + phosphate. The catalysed reaction is GTP + succinate + CoA = succinyl-CoA + GDP + phosphate. It functions in the pathway carbohydrate metabolism; tricarboxylic acid cycle; succinate from succinyl-CoA (ligase route): step 1/1. Functionally, succinyl-CoA synthetase functions in the citric acid cycle (TCA), coupling the hydrolysis of succinyl-CoA to the synthesis of either ATP or GTP and thus represents the only step of substrate-level phosphorylation in the TCA. The beta subunit provides nucleotide specificity of the enzyme and binds the substrate succinate, while the binding sites for coenzyme A and phosphate are found in the alpha subunit. The protein is Succinate--CoA ligase [ADP-forming] subunit beta of Cupriavidus pinatubonensis (strain JMP 134 / LMG 1197) (Cupriavidus necator (strain JMP 134)).